Here is a 605-residue protein sequence, read N- to C-terminus: Pescadillo homolog (605 aa).

Residues 51-484 (KANKGSTAPT…GEEEESESES (434 aa)) are sufficient for interaction with ERB1. Ser-288 is subject to Phosphoserine. Positions 294-342 (LKSALNADEANTDETEKEEEQEKKQEKEQEKEQNEETELDTFEDNNKNK) form a coiled coil. Residues 297-342 (ALNADEANTDETEKEEEQEKKQEKEQEKEQNEETELDTFEDNNKNK) form a disordered region. A compositionally biased stretch (acidic residues) spans 303-312 (ANTDETEKEE). Thr-308 is modified (phosphothreonine). Residues 313-327 (EQEKKQEKEQEKEQN) are compositionally biased toward basic and acidic residues. The BRCT domain occupies 355–449 (PVASLFSAFV…ELVPANKYLP (95 aa)). The segment at 459-605 (PWGDAIGYDP…AKLNKLDSKK (147 aa)) is disordered. The segment covering 473 to 510 (EEGEEEESESESESEDQVEEEDQEVVAGEEDDDDDEEL) has biased composition (acidic residues). The stretch at 530 to 605 (EADKDVNKSK…AKLNKLDSKK (76 aa)) forms a coiled coil. Basic residues predominate over residues 562–571 (KQKKLYKKMK). Basic and acidic residues predominate over residues 575–584 (AKKEEQAENL). The segment covering 585-598 (KKKKKQIAKQKAKL) has biased composition (basic residues).

This sequence belongs to the pescadillo family. Component of the NOP7 complex, composed of ERB1, NOP7 and YTM1. The complex is held together by ERB1, which interacts with NOP7 via its N-terminal domain and with YTM1 via a high-affinity interaction between the seven-bladed beta-propeller domains of the 2 proteins. The NOP7 complex associates with the 66S pre-ribosome.

It is found in the nucleus. The protein resides in the nucleolus. The protein localises to the nucleoplasm. In terms of biological role, component of the NOP7 complex, which is required for maturation of the 25S and 5.8S ribosomal RNAs and formation of the 60S ribosome. This chain is Pescadillo homolog, found in Saccharomyces cerevisiae (strain YJM789) (Baker's yeast).